The primary structure comprises 96 residues: Protein Vpr (96 aa).

The homooligomerization stretch occupies residues 1–42 (MEQAPEDQGPQREPYNEWTLELLEELKSEAVRHFPRIWLHNL). A phosphoserine; by host mark is found at S79, S94, and S96.

It belongs to the HIV-1 VPR protein family. As to quaternary structure, homooligomer, may form homodimer. Interacts with p6-gag region of the Pr55 Gag precursor protein through a (Leu-X-X)4 motif near the C-terminus of the P6gag protein. Interacts with host UNG. May interact with host RAD23A/HHR23A. Interacts with host VPRBP/DCAF1, leading to hijack the CUL4A-RBX1-DDB1-DCAF1/VPRBP complex, mediating ubiquitination of host proteins such as TERT and ZGPAT and arrest of the cell cycle in G2 phase. In terms of processing, phosphorylated on several residues by host. These phosphorylations regulate VPR activity for the nuclear import of the HIV-1 pre-integration complex.

Its subcellular location is the virion. The protein resides in the host nucleus. It localises to the host extracellular space. Functionally, during virus replication, may deplete host UNG protein, and incude G2-M cell cycle arrest. Acts by targeting specific host proteins for degradation by the 26S proteasome, through association with the cellular CUL4A-DDB1 E3 ligase complex by direct interaction with host VPRPB/DCAF-1. Cell cycle arrest reportedly occurs within hours of infection and is not blocked by antiviral agents, suggesting that it is initiated by the VPR carried into the virion. Additionally, VPR induces apoptosis in a cell cycle dependent manner suggesting that these two effects are mechanistically linked. Detected in the serum and cerebrospinal fluid of AIDS patient, VPR may also induce cell death to bystander cells. Its function is as follows. During virus entry, plays a role in the transport of the viral pre-integration (PIC) complex to the host nucleus. This function is crucial for viral infection of non-dividing macrophages. May act directly at the nuclear pore complex, by binding nucleoporins phenylalanine-glycine (FG)-repeat regions. The protein is Protein Vpr of Homo sapiens (Human).